Consider the following 931-residue polypeptide: Protocadherin gamma-A5 (931 aa).

An N-terminal signal peptide occupies residues 1-29; the sequence is MASPPRGWGCGELLLPFMLLGTLCEPGSG. Cadherin domains follow at residues 30 to 133, 134 to 242, 243 to 347, 348 to 452, 453 to 562, and 570 to 683; these read QIRY…FPRF, RDEE…APLF, TPSE…APEV, ILTS…PPNF, PQAS…TPEI, and DGST…TPID. Residues 30-692 are Extracellular-facing; that stretch reads QIRYSMPEEL…DPEDLDLTLY (663 aa). N-linked (GlcNAc...) asparagine glycans are attached at residues Asn-419 and Asn-545. Residues 693-713 traverse the membrane as a helical segment; that stretch reads LVVAVAAVSCVFLAFVIVLLV. At 714–931 the chain is on the cytoplasmic side; that stretch reads LRLRRWHKSR…KKKSGKKEKK (218 aa). Disordered regions lie at residues 800–840 and 901–931; these read NKEE…WPNN and ATLT…KEKK. A compositionally biased stretch (polar residues) spans 809–840; that stretch reads APPNTDWRFSQAQRPGTSGSQNGDDTGTWPNN. Basic residues predominate over residues 921–931; it reads NKKKSGKKEKK.

It is found in the cell membrane. Functionally, potential calcium-dependent cell-adhesion protein. May be involved in the establishment and maintenance of specific neuronal connections in the brain. The sequence is that of Protocadherin gamma-A5 (PCDHGA5) from Homo sapiens (Human).